The chain runs to 210 residues: dITP/XTP pyrophosphatase (210 aa).

Substrate is bound at residue 19 to 24 (SNNPGK). The Mg(2+) site is built by Asp51 and Asp80. The active-site Proton acceptor is the Asp80. Substrate contacts are provided by residues Ser81, 166-169 (FGYD), Lys189, and 194-195 (HR).

This sequence belongs to the HAM1 NTPase family. As to quaternary structure, homodimer. Mg(2+) serves as cofactor.

The catalysed reaction is XTP + H2O = XMP + diphosphate + H(+). The enzyme catalyses dITP + H2O = dIMP + diphosphate + H(+). It catalyses the reaction ITP + H2O = IMP + diphosphate + H(+). In terms of biological role, pyrophosphatase that catalyzes the hydrolysis of nucleoside triphosphates to their monophosphate derivatives, with a high preference for the non-canonical purine nucleotides XTP (xanthosine triphosphate), dITP (deoxyinosine triphosphate) and ITP. Seems to function as a house-cleaning enzyme that removes non-canonical purine nucleotides from the nucleotide pool, thus preventing their incorporation into DNA/RNA and avoiding chromosomal lesions. The polypeptide is dITP/XTP pyrophosphatase (Burkholderia mallei (strain ATCC 23344)).